Here is a 179-residue protein sequence, read N- to C-terminus: Large ribosomal subunit protein uL5 (179 aa).

The protein belongs to the universal ribosomal protein uL5 family. As to quaternary structure, part of the 50S ribosomal subunit; part of the 5S rRNA/L5/L18/L25 subcomplex. Contacts the 5S rRNA and the P site tRNA. Forms a bridge to the 30S subunit in the 70S ribosome.

Functionally, this is one of the proteins that bind and probably mediate the attachment of the 5S RNA into the large ribosomal subunit, where it forms part of the central protuberance. In the 70S ribosome it contacts protein S13 of the 30S subunit (bridge B1b), connecting the 2 subunits; this bridge is implicated in subunit movement. Contacts the P site tRNA; the 5S rRNA and some of its associated proteins might help stabilize positioning of ribosome-bound tRNAs. The protein is Large ribosomal subunit protein uL5 of Prochlorococcus marinus (strain NATL2A).